The primary structure comprises 659 residues: Homeobox protein slou (659 aa).

Positions 1 to 21 (MVMLQSPAQKASDSASAQNTA) are enriched in polar residues. 6 disordered regions span residues 1-63 (MVML…PAAK), 94-152 (MSSE…SFSS), 198-298 (AQQH…AAPS), 316-349 (TQASSTSALASASNSVSNASISISNSSSGSPSGR), 376-440 (QIAA…DRDA), and 455-548 (PNKF…PRRA). Low complexity-rich tracts occupy residues 27–51 (SPNSNPDSPKSNTSPDVASADSVVS), 95–108 (SSESGSLLSRLSPL), and 120–135 (HNNNNSLTNHNANSNT). A compositionally biased stretch (polar residues) spans 136 to 152 (RRSQSPPASVGSVSFSS). Residues 201-232 (HMHHHQHQHHQHPAHPHSHQHPHPHPHPHPHP) are compositionally biased toward basic residues. Repeat copies occupy residues 221-222 (HP), 223-224 (HP), 225-226 (HP), 227-228 (HP), 229-230 (HP), 231-232 (HP), and 233-234 (HP). The tract at residues 221 to 234 (HPHPHPHPHPHPHP) is 7 X 2 AA tandem repeats of H-P. 2 stretches are compositionally biased toward pro residues: residues 250 to 263 (PPSPATSPLSPPTS) and 275 to 286 (PIAPPQNPPHSS). 2 stretches are compositionally biased toward low complexity: residues 287-298 (QPPQQQQVAAPS) and 316-347 (TQASSTSALASASNSVSNASISISNSSSGSPS). Residues 388–401 (SEELNVDGNDEDSN) show a composition bias toward acidic residues. Residues 417–435 (RSVNSSAAANPSSASTSAS) are compositionally biased toward low complexity. Acidic residues-rich tracts occupy residues 478-492 (RDEEMQERLDDDQSE) and 500-519 (NDMDQDDMCDDGSDIDDPSS). A compositionally biased stretch (gly residues) spans 528–543 (SRNGDGKSGGGGGGGS). A DNA-binding region (homeobox) is located at residues 545–604 (PRRARTAFTYEQLVSLENKFKTTRYLSVCERLNLALSLSLTETQVKIWFQNRRTKWKKQN).

It belongs to the NK-1 homeobox family. In terms of tissue distribution, mesodermal precursor cells of distinct muscles during embryogenesis, a subset of neuronal cells of the CNS and their precursors and also in cells of a small region of the midgut.

It localises to the nucleus. Functionally, may play a role in specifying the identity of particular somatic muscles and neurons of the CNS. The protein is Homeobox protein slou (slou) of Drosophila melanogaster (Fruit fly).